A 492-amino-acid polypeptide reads, in one-letter code: Heat shock factor protein 4 (492 aa).

A DNA-binding region spans residues 17 to 121 (VPAFLGKLWA…QLLERVRRKV (105 aa)). The hydrophobic repeat HR-A/B stretch occupies residues 129–203 (GRWRPEDLGR…GPLQTGSSGA (75 aa)). The tract at residues 245-323 (LPETTLGLSS…ECDFCVTAPP (79 aa)) is interactions with DUSP26, MAPK1 and MAPK2. Positions 250–286 (LGLSSSHRTRGPIISDIHEDSPSPDGTRLSPSSGGRR) are disordered. Residue Lys-294 forms a Glycyl lysine isopeptide (Lys-Gly) (interchain with G-Cter in SUMO) linkage. Ser-299 carries the post-translational modification Phosphoserine. The interval 337–378 (KGNFSPEGPRNAQQPEPRGPREVPDRGTLGLDRGARSPENLL) is disordered. Residues 365–390 (LGLDRGARSPENLLPPMLLRAPPESV) form a hydrophobic repeat HR-C region.

This sequence belongs to the HSF family. In terms of assembly, homotrimer. Exhibits constitutive DNA binding and forms trimers even in the absence of stress. Interacts with ALKBH4, DUSP26, MAPK1, MAPK2, MAPK8 and MAP kinase p38. In terms of processing, phosphorylated mainly on serine residues. Phosphorylation on Ser-299 promotes sumoylation on Lys-294. Post-translationally, constitutively sumoylated. Sumoylation represses the transcriptional activity and is promoted by phosphorylation on Ser-299.

The protein localises to the nucleus. Functionally, heat-shock transcription factor that specifically binds heat shock promoter elements (HSE). Required for denucleation and organelle rupture and degradation that occur during eye lens terminal differentiation, when fiber cells that compose the lens degrade all membrane-bound organelles in order to provide lens with transparency to allow the passage of light. In this process, may regulate denucleation of lens fiber cells in part by activating DNASE2B transcription. May be involved in DNA repair through the transcriptional regulation of RAD51. May up-regulate p53/TP53 protein in eye lens fiber cells, possibly through protein stabilization. In the eye lens, controls the expression of alpha-crystallin B chain/CRYAB and consequently may be involved in the regulation of lysosomal acidification. The polypeptide is Heat shock factor protein 4 (HSF4) (Canis lupus familiaris (Dog)).